Consider the following 288-residue polypeptide: ATP synthase gamma chain (288 aa).

The protein belongs to the ATPase gamma chain family. F-type ATPases have 2 components, CF(1) - the catalytic core - and CF(0) - the membrane proton channel. CF(1) has five subunits: alpha(3), beta(3), gamma(1), delta(1), epsilon(1). CF(0) has three main subunits: a, b and c.

It localises to the cell inner membrane. Produces ATP from ADP in the presence of a proton gradient across the membrane. The gamma chain is believed to be important in regulating ATPase activity and the flow of protons through the CF(0) complex. This Stutzerimonas stutzeri (strain A1501) (Pseudomonas stutzeri) protein is ATP synthase gamma chain.